The primary structure comprises 288 residues: ATP synthase gamma chain (288 aa).

Belongs to the ATPase gamma chain family. As to quaternary structure, F-type ATPases have 2 components, CF(1) - the catalytic core - and CF(0) - the membrane proton channel. CF(1) has five subunits: alpha(3), beta(3), gamma(1), delta(1), epsilon(1). CF(0) has three main subunits: a, b and c.

Its subcellular location is the cell inner membrane. Functionally, produces ATP from ADP in the presence of a proton gradient across the membrane. The gamma chain is believed to be important in regulating ATPase activity and the flow of protons through the CF(0) complex. This is ATP synthase gamma chain from Rickettsia typhi (strain ATCC VR-144 / Wilmington).